A 652-amino-acid chain; its full sequence is Vitrin (652 aa).

A signal peptide spans 1–26 (MGIVVLTMKASVIEMFLVLLVTGIQS). An LCCL domain is found at 40-133 (TVPQISCDVR…LSLPRWRESF (94 aa)). Intrachain disulfides connect C46/C62 and C66/C86. Disordered stretches follow at residues 137 to 181 (EGKP…AAQP) and 196 to 231 (THTTLPKPSPSAGSTASGLRPQPAGQRSKDLGEPAL). Low complexity predominate over residues 145 to 158 (TYPSSLTYSSSKSP). Residues 196-212 (THTTLPKPSPSAGSTAS) show a composition bias toward polar residues. VWFA domains lie at 267–452 (DLSF…VKRV) and 469–638 (DIGF…VPKV). N494 carries an N-linked (GlcNAc...) asparagine glycan.

As to quaternary structure, binds dermatan sulfate and chondroitin sulfate.

Its subcellular location is the secreted. It is found in the extracellular space. The protein resides in the extracellular matrix. Its function is as follows. Promotes matrix assembly and cell adhesiveness. Plays a role in spinal cord formation by regulating the proliferation and differentiation of neural stem cells. The chain is Vitrin (VIT) from Bos taurus (Bovine).